A 220-amino-acid polypeptide reads, in one-letter code: Putative glutathione S-transferase C1183.02 (220 aa).

Positions 2-81 (FLGTLYSFKT…YFYEKGKHND (80 aa)) constitute a GST N-terminal domain. The GST C-terminal domain maps to 89-216 (NEVEEAEMLK…FPLELPLTVT (128 aa)).

It belongs to the GST superfamily.

The protein resides in the cytoplasm. It carries out the reaction RX + glutathione = an S-substituted glutathione + a halide anion + H(+). Functionally, involved in the oxidative stress response and detoxification. The chain is Putative glutathione S-transferase C1183.02 from Schizosaccharomyces pombe (strain 972 / ATCC 24843) (Fission yeast).